The chain runs to 234 residues: Sugar fermentation stimulation protein homolog (234 aa).

It belongs to the SfsA family.

This is Sugar fermentation stimulation protein homolog from Edwardsiella ictaluri (strain 93-146).